A 225-amino-acid chain; its full sequence is UPF0758 protein BB3258 (225 aa).

Residues 103–225 (ALANPDLVRR…TVSMAAQGHL (123 aa)) enclose the MPN domain. H174, H176, and D187 together coordinate Zn(2+). Positions 174 to 187 (HNHPGGTAAASAAD) match the JAMM motif motif.

Belongs to the UPF0758 family.

This is UPF0758 protein BB3258 from Bordetella bronchiseptica (strain ATCC BAA-588 / NCTC 13252 / RB50) (Alcaligenes bronchisepticus).